The following is a 354-amino-acid chain: F-box/kelch-repeat protein At1g80440 (354 aa).

Positions 2–49 constitute an F-box domain; the sequence is ELIPNLPDDVARECLLRSSYQQFPVIASVCRAWNREVSLSQFLHQRKA. Kelch repeat units follow at residues 63 to 110, 115 to 163, 166 to 213, and 215 to 263; these read RVDP…CRLV, DLIV…ASDS, TVLV…FHAG, and FHVI…PPTC.

This Arabidopsis thaliana (Mouse-ear cress) protein is F-box/kelch-repeat protein At1g80440.